The primary structure comprises 374 residues: tRNA-specific 2-thiouridylase MnmA (374 aa).

ATP contacts are provided by residues 12–19 (GMSGGVDS) and Met38. The segment at 98 to 100 (NPD) is interaction with target base in tRNA. The Nucleophile role is filled by Cys103. An intrachain disulfide couples Cys103 to Cys202. Gly128 lines the ATP pocket. The segment at 152-154 (KDQ) is interaction with tRNA. The active-site Cysteine persulfide intermediate is Cys202. An interaction with tRNA region spans residues 316-317 (RY).

This sequence belongs to the MnmA/TRMU family.

It is found in the cytoplasm. The enzyme catalyses S-sulfanyl-L-cysteinyl-[protein] + uridine(34) in tRNA + AH2 + ATP = 2-thiouridine(34) in tRNA + L-cysteinyl-[protein] + A + AMP + diphosphate + H(+). In terms of biological role, catalyzes the 2-thiolation of uridine at the wobble position (U34) of tRNA, leading to the formation of s(2)U34. The chain is tRNA-specific 2-thiouridylase MnmA from Vibrio vulnificus (strain YJ016).